The sequence spans 240 residues: Uridylate kinase (240 aa).

Lys-14–Gly-17 lines the ATP pocket. A UMP-binding site is contributed by Gly-56. Positions 57 and 61 each coordinate ATP. UMP is bound by residues Asp-76 and Thr-137–Thr-144. 3 residues coordinate ATP: Thr-164, Tyr-170, and Asp-173.

This sequence belongs to the UMP kinase family. As to quaternary structure, homohexamer.

Its subcellular location is the cytoplasm. It catalyses the reaction UMP + ATP = UDP + ADP. Its pathway is pyrimidine metabolism; CTP biosynthesis via de novo pathway; UDP from UMP (UMPK route): step 1/1. With respect to regulation, inhibited by UTP. In terms of biological role, catalyzes the reversible phosphorylation of UMP to UDP. The sequence is that of Uridylate kinase from Acidovorax sp. (strain JS42).